The sequence spans 242 residues: Glutamate transport ATP-binding protein GluA (242 aa).

The region spanning 2–236 (IKMTGVQKYF…PKSDRAKDFL (235 aa)) is the ABC transporter domain. 34–41 (GPSGSGKS) is an ATP binding site.

This sequence belongs to the ABC transporter superfamily. The complex is composed of two ATP-binding proteins (GluA), two transmembrane proteins (GluC and GluD) and a solute-binding protein (GluB).

It localises to the cell membrane. It carries out the reaction a polar amino acid(out) + ATP + H2O = a polar amino acid(in) + ADP + phosphate + H(+). The catalysed reaction is L-glutamate(out) + ATP + H2O = L-glutamate(in) + ADP + phosphate + H(+). Functionally, part of the ABC transporter complex GluABCD involved in glutamate uptake. Probably responsible for energy coupling to the transport system. The polypeptide is Glutamate transport ATP-binding protein GluA (Corynebacterium glutamicum (strain ATCC 13032 / DSM 20300 / JCM 1318 / BCRC 11384 / CCUG 27702 / LMG 3730 / NBRC 12168 / NCIMB 10025 / NRRL B-2784 / 534)).